The sequence spans 638 residues: MNLSDLSHPNQLRDLSVSQLGRLAQQIRDKHLQTVAATGGHLGPGLGVVELTLALYKTLDLDRDRVVWDVGHQAYPHKMLTGRYANFHTLRQKDGLAGYLKRAESPFDCWGAGHASTSISAALGMALARDFQGLNRKVVAIIGDGALTGGMALEALNHAGHLSKTNLMVILNDNEMSISENVGGLSLYLNRLRTDPALRQIRSNLETQLRNIPLVGPTFSPEFERFKDTVKYMTMTRSKAGVIFEELGFTYLGPIDGHNLGDLIETFEFAHSLPGPVFLHAITVKGKGYEVAEQNQIKYHAQSAFDLATGKAKPASKPTPPAYTSVFAQTLVKLAEQNEKIVGITAAMPTGTGLDKFKERFADRYFDVGIAEQHAVTMAAGLAADGMRPVAAIYSTFLQRAFDQIIHDVAIQDLPVFFCLDRAGVVGEDGPTHHGVFDLAYLRQIPGLVVMAPKDEAELQRMMVTGIQYTKGPIAVRYPRGSGSGAPLMAEGWDPVPIGKAEVLRSGDDLLIVAIGTMVHPSLQAAALLSEHGIDATVVNARFAKPLDTELLLPLARRIGRVVTVEEGCRMGGFGSAVLEALMDGGIAVPTLRIGIDDKFVTHAGRSQLLDLLGLTPSGIAKTIRESLSTEPVSAPRA.

Thiamine diphosphate is bound by residues histidine 72 and 113–115 (GHA). Position 144 (aspartate 144) interacts with Mg(2+). Residues 145 to 146 (GA), asparagine 174, tyrosine 289, and glutamate 372 contribute to the thiamine diphosphate site. Asparagine 174 contributes to the Mg(2+) binding site.

Belongs to the transketolase family. DXPS subfamily. As to quaternary structure, homodimer. Mg(2+) serves as cofactor. Requires thiamine diphosphate as cofactor.

The enzyme catalyses D-glyceraldehyde 3-phosphate + pyruvate + H(+) = 1-deoxy-D-xylulose 5-phosphate + CO2. It functions in the pathway metabolic intermediate biosynthesis; 1-deoxy-D-xylulose 5-phosphate biosynthesis; 1-deoxy-D-xylulose 5-phosphate from D-glyceraldehyde 3-phosphate and pyruvate: step 1/1. In terms of biological role, catalyzes the acyloin condensation reaction between C atoms 2 and 3 of pyruvate and glyceraldehyde 3-phosphate to yield 1-deoxy-D-xylulose-5-phosphate (DXP). This is 1-deoxy-D-xylulose-5-phosphate synthase from Gloeobacter violaceus (strain ATCC 29082 / PCC 7421).